Here is a 265-residue protein sequence, read N- to C-terminus: Tryptophan synthase alpha chain (265 aa).

Residues Glu-48 and Asp-59 each act as proton acceptor in the active site.

This sequence belongs to the TrpA family. In terms of assembly, tetramer of two alpha and two beta chains.

It carries out the reaction (1S,2R)-1-C-(indol-3-yl)glycerol 3-phosphate + L-serine = D-glyceraldehyde 3-phosphate + L-tryptophan + H2O. It functions in the pathway amino-acid biosynthesis; L-tryptophan biosynthesis; L-tryptophan from chorismate: step 5/5. Its function is as follows. The alpha subunit is responsible for the aldol cleavage of indoleglycerol phosphate to indole and glyceraldehyde 3-phosphate. The sequence is that of Tryptophan synthase alpha chain from Pelagibacter ubique (strain HTCC1062).